The primary structure comprises 115 residues: Small ribosomal subunit protein bS6 (115 aa).

The protein belongs to the bacterial ribosomal protein bS6 family.

Functionally, binds together with bS18 to 16S ribosomal RNA. This chain is Small ribosomal subunit protein bS6, found in Syntrophotalea carbinolica (strain DSM 2380 / NBRC 103641 / GraBd1) (Pelobacter carbinolicus).